The primary structure comprises 124 residues: MARVKRGVTTRARHKKVIKLAKGYRGRSKNCYRIALQRVEKALQYAYRDRRNRKRFFRSLWIMRINAAVRQHGLLYSDFIHGLSLANVTLNRKVLADMAVNHKDHFKQIVDLIKEALNKSRVAQ.

The protein belongs to the bacterial ribosomal protein bL20 family.

In terms of biological role, binds directly to 23S ribosomal RNA and is necessary for the in vitro assembly process of the 50S ribosomal subunit. It is not involved in the protein synthesizing functions of that subunit. This is Large ribosomal subunit protein bL20 from Ehrlichia chaffeensis (strain ATCC CRL-10679 / Arkansas).